The sequence spans 648 residues: 1-deoxy-D-xylulose-5-phosphate synthase 1 (648 aa).

Thiamine diphosphate contacts are provided by residues H82 and 123 to 125; that span reads AHS. Position 154 (D154) interacts with Mg(2+). Thiamine diphosphate contacts are provided by residues 155 to 156, N183, Y292, and E374; that span reads GS. N183 is a Mg(2+) binding site.

This sequence belongs to the transketolase family. DXPS subfamily. In terms of assembly, homodimer. Mg(2+) is required as a cofactor. Requires thiamine diphosphate as cofactor.

The catalysed reaction is D-glyceraldehyde 3-phosphate + pyruvate + H(+) = 1-deoxy-D-xylulose 5-phosphate + CO2. It participates in metabolic intermediate biosynthesis; 1-deoxy-D-xylulose 5-phosphate biosynthesis; 1-deoxy-D-xylulose 5-phosphate from D-glyceraldehyde 3-phosphate and pyruvate: step 1/1. Functionally, catalyzes the acyloin condensation reaction between C atoms 2 and 3 of pyruvate and glyceraldehyde 3-phosphate to yield 1-deoxy-D-xylulose-5-phosphate (DXP). The chain is 1-deoxy-D-xylulose-5-phosphate synthase 1 from Cereibacter sphaeroides (strain ATCC 17023 / DSM 158 / JCM 6121 / CCUG 31486 / LMG 2827 / NBRC 12203 / NCIMB 8253 / ATH 2.4.1.) (Rhodobacter sphaeroides).